Reading from the N-terminus, the 99-residue chain is Cytochrome c-555 (99 aa).

4 residues coordinate heme c: cysteine 23, cysteine 26, histidine 27, and methionine 73.

Post-translationally, binds 1 heme c group covalently per subunit.

The protein is Cytochrome c-555 of Prosthecochloris aestuarii.